Here is a 117-residue protein sequence, read N- to C-terminus: Holo-[acyl-carrier-protein] synthase (117 aa).

Mg(2+) is bound by residues Asp8 and Glu58.

Belongs to the P-Pant transferase superfamily. AcpS family. The cofactor is Mg(2+).

It localises to the cytoplasm. It catalyses the reaction apo-[ACP] + CoA = holo-[ACP] + adenosine 3',5'-bisphosphate + H(+). In terms of biological role, transfers the 4'-phosphopantetheine moiety from coenzyme A to a Ser of acyl-carrier-protein. This chain is Holo-[acyl-carrier-protein] synthase, found in Staphylococcus epidermidis (strain ATCC 35984 / DSM 28319 / BCRC 17069 / CCUG 31568 / BM 3577 / RP62A).